We begin with the raw amino-acid sequence, 338 residues long: MGIESTSHTFGVGIVKYVSSINETRILANTYDKYIPEKGGIHPREAALHHARVAAKVLSDALQKANISMRDVSAIAVALGPGLGPCLRVGASLARFLSSYYNIPLIPVNHAVAHIEIGKFLFGFKDPLIIYVSGGNTLIAIQRKKRYRILGETLDIPIGNLLDTFAREIGLAPPYIVNGKHQVDICAEWGSEFISLPYTVKGSDLSFSGLLTAALSLAEKYIDNKKKLGNVCLSLRETAFNMLVEVAERSLVLAGKKEVLLVGGVASNKVLRKKLELMASLHGAKYAGTPPEYSGDNGAMIAYTGLLGYLHNVIVEPRKAFVRQRWRLDEVELPWIQD.

3 residues coordinate Fe cation: His-110, His-114, and Tyr-131. Substrate contacts are provided by residues 131-135 (YVSGG), Asp-163, Asp-184, and Asn-268. Asp-296 is a Fe cation binding site.

This sequence belongs to the KAE1 / TsaD family. It depends on Fe(2+) as a cofactor.

It is found in the cytoplasm. It catalyses the reaction L-threonylcarbamoyladenylate + adenosine(37) in tRNA = N(6)-L-threonylcarbamoyladenosine(37) in tRNA + AMP + H(+). Functionally, required for the formation of a threonylcarbamoyl group on adenosine at position 37 (t(6)A37) in tRNAs that read codons beginning with adenine. Is probably involved in the transfer of the threonylcarbamoyl moiety of threonylcarbamoyl-AMP (TC-AMP) to the N6 group of A37. The polypeptide is tRNA N6-adenosine threonylcarbamoyltransferase (Staphylothermus marinus (strain ATCC 43588 / DSM 3639 / JCM 9404 / F1)).